The sequence spans 381 residues: MSASSSSFEQPQVITCNAAVAWRAGEPLVMEEVEVSPPQPLEIRIKVVCTSLCRSDLSAWESQSLLPRIFGHEAAGIVESIGEGVTEFEKGDHVLAVFTGECGSCRHCISGKSNMCQVLGMERKGLMHSDQKTRFSIKGKPVYHYCAVSSFSEYTVVHSGCAVKVDPLAPLHKICLLSCGVAAGLGAAWNVADVQKGSSVVIFGLGTVGLSVAQGAKLRGAAQILGVDINPAKAEQAKTFGVTDFINSNDLSEPIPQVIKRMTGGGADFSFECVGDTGIATTALQSCSDGWGMTVTLGVPKAKPEVSAHYGLFLSGKSLKGTLFGGWKPKSDLPSLIDKYMNKEIMIDEFITHNLSFDEINKAFVLMREGKCLRCVLHMPK.

The Zn(2+) site is built by cysteine 53, serine 55, histidine 72, cysteine 102, cysteine 105, cysteine 108, cysteine 116, and cysteine 179. 2 residues coordinate an alcohol: serine 55 and histidine 72. Residue serine 55 coordinates NAD(+). NAD(+) contacts are provided by residues 204–209 (GLGTVG), aspartate 228, lysine 233, 297–299 (LGV), phenylalanine 324, and arginine 374.

This sequence belongs to the zinc-containing alcohol dehydrogenase family. Class-III subfamily. In terms of assembly, homodimer. Zn(2+) serves as cofactor.

It localises to the cytoplasm. It catalyses the reaction a primary alcohol + NAD(+) = an aldehyde + NADH + H(+). The catalysed reaction is a secondary alcohol + NAD(+) = a ketone + NADH + H(+). The protein is Alcohol dehydrogenase-like 6 of Arabidopsis thaliana (Mouse-ear cress).